The following is a 339-amino-acid chain: Anthranilate phosphoribosyltransferase (339 aa).

Residues Gly-81, Gly-84–Asp-85, Ser-89, Asn-91–Ser-94, Lys-109–Ser-117, and Ala-121 contribute to the 5-phospho-alpha-D-ribose 1-diphosphate site. Gly-81 serves as a coordination point for anthranilate. Ser-93 serves as a coordination point for Mg(2+). Asn-112 is an anthranilate binding site. Anthranilate is bound at residue Arg-167. Residues Asp-225 and Glu-226 each coordinate Mg(2+).

It belongs to the anthranilate phosphoribosyltransferase family. Homodimer. Mg(2+) serves as cofactor.

The enzyme catalyses N-(5-phospho-beta-D-ribosyl)anthranilate + diphosphate = 5-phospho-alpha-D-ribose 1-diphosphate + anthranilate. The protein operates within amino-acid biosynthesis; L-tryptophan biosynthesis; L-tryptophan from chorismate: step 2/5. Functionally, catalyzes the transfer of the phosphoribosyl group of 5-phosphorylribose-1-pyrophosphate (PRPP) to anthranilate to yield N-(5'-phosphoribosyl)-anthranilate (PRA). This is Anthranilate phosphoribosyltransferase from Brucella canis (strain ATCC 23365 / NCTC 10854 / RM-666).